A 294-amino-acid polypeptide reads, in one-letter code: MFPSPVTTTPFSVKDILNLEQQQQGGLAPMELSSPSCMLATFKQEAFGSEPPALPELPEPPPAKPPAAFPGPYYVKSYGEMDTAKDSKADKKELCALHKSLEQEKRELEDPERPRQRKRRKPRVLFSQAQVYELERRFKQQKYLSAPERDHLANVLKLTSTQVKIWFQNRRYKCKRQRQDQTLEMVGIPPPRRIAVPVLVRDGKPCLGESSPYSSPYNVSINPYSYNAYPAYPNYNSPACNANYNCSYPAVQPVQPSAAGNNFMNFSVGDLNSVQPPIPQGNAGISTLHGIRAW.

Disordered regions lie at residues 48-69 (GSEP…PAAF) and 102-122 (EQEK…RRKP). A compositionally biased stretch (pro residues) spans 52–69 (PALPELPEPPPAKPPAAF). The segment covering 102-114 (EQEKRELEDPERP) has biased composition (basic and acidic residues). Positions 119 to 178 (RRKPRVLFSQAQVYELERRFKQQKYLSAPERDHLANVLKLTSTQVKIWFQNRRYKCKRQR) form a DNA-binding region, homeobox.

The protein belongs to the NK-2 homeobox family. Homodimer (via the homeobox); binds DNA as homodimer.

It localises to the nucleus. Transcription factor required for the development of the heart and the spleen. Implicated in commitment to and/or differentiation of the myocardial lineage. Binds to the core DNA motif of promoter. The chain is Homeobox protein Nkx-2.5 (NKX-2.5) from Gallus gallus (Chicken).